We begin with the raw amino-acid sequence, 365 residues long: tRNA(Met) cytidine acetate ligase (365 aa).

Residues 7 to 20 (IAEFNPFHNGHKYL), G96, N152, and R175 each bind ATP.

Belongs to the TmcAL family.

Its subcellular location is the cytoplasm. It carries out the reaction cytidine(34) in elongator tRNA(Met) + acetate + ATP = N(4)-acetylcytidine(34) in elongator tRNA(Met) + AMP + diphosphate. Functionally, catalyzes the formation of N(4)-acetylcytidine (ac(4)C) at the wobble position of elongator tRNA(Met), using acetate and ATP as substrates. First activates an acetate ion to form acetyladenylate (Ac-AMP) and then transfers the acetyl group to tRNA to form ac(4)C34. This is tRNA(Met) cytidine acetate ligase from Streptococcus pneumoniae (strain 70585).